A 1039-amino-acid polypeptide reads, in one-letter code: Multidrug resistance protein MdtB (1039 aa).

Helical transmembrane passes span 15–37 (LFIM…GIIG), 345–362 (FELM…YLFL), 367–389 (ATII…MVFL), 396–418 (LTLM…VIEN), 438–460 (GEIG…PLLF), 472–494 (FAIT…TPMM), 535–557 (HPWL…WVFI), 866–888 (VWLI…ESFI), 908–930 (LMIA…IGIV), 967–989 (ILMT…GVGA), and 999–1021 (MVGG…YLLF).

The protein belongs to the resistance-nodulation-cell division (RND) (TC 2.A.6) family. MdtB subfamily. In terms of assembly, part of a tripartite efflux system composed of MdtA, MdtB and MdtC. MdtB forms a heteromultimer with MdtC.

It localises to the cell inner membrane. This chain is Multidrug resistance protein MdtB, found in Shigella flexneri.